The primary structure comprises 75 residues: Alpha-elapitoxin-Bc2a (75 aa).

A signal peptide spans 1-2; it reads YT. 5 cysteine pairs are disulfide-bonded: C5–C24, C17–C45, C30–C34, C49–C60, and C61–C66.

This sequence belongs to the three-finger toxin family. Long-chain subfamily. Type II alpha-neurotoxin sub-subfamily. As to quaternary structure, monomer in solution, homodimer in crystal state. As to expression, expressed by the venom gland.

It is found in the secreted. Binds to muscular and neuronal nicotinic acetylcholine receptor (nAChR) and inhibits acetylcholine from binding to the receptor, thereby impairing neuromuscular and neuronal transmission. Reversibly blocks chick and mouse muscle nicotinic acetylcholine receptors. Blocks muscle type nAChR with an IC(50)=30 nM, when heterologously expressed in oocytes. Also binds with high affinity to alpha-7/CHRNA7 nAChRs. In addition, shows a weak inhibition of neuronal alpha-3-beta-2/CHRNA3-CHRNB2 nAChR (IC(50)=2.9 uM). Selectively binds to alpha-1-delta subunit interface of the mouse muscle nicotinic acetylcholine receptor, with a 10-fold higher affinity for the adult than for the fetal receptors. In vivo, when intraperitoneally injected into mice, causes flaccid paralysis and respiratory distress, followed by death within 2-4 hours. This chain is Alpha-elapitoxin-Bc2a, found in Bungarus candidus (Malayan krait).